We begin with the raw amino-acid sequence, 177 residues long: Ribonuclease alpha-sarcin (177 aa).

An N-terminal signal peptide occupies residues 1 to 27; it reads MVAIKNLVLVALTAVTALAVPSPLEAR. Disulfide bonds link cysteine 33–cysteine 175 and cysteine 103–cysteine 159. Residue histidine 77 is part of the active site. The interval 86-119 is disordered; the sequence is DGKLPKGRTPIKFGKSDCDRPPKHSKDGNGKTDH. The segment covering 99-119 has biased composition (basic and acidic residues); sequence GKSDCDRPPKHSKDGNGKTDH. The active-site Proton acceptor is the glutamate 123. Histidine 164 (proton donor) is an active-site residue.

It belongs to the ribonuclease U2 family.

The protein resides in the secreted. The catalysed reaction is a 28S rRNA containing guanosine-adenosine pair + H2O = an [RNA fragment]-3'-adenosine-3'-phosphate + a 5'-a hydroxy-guanosine-3'-[RNA fragment].. Alpha-sarcin is specific for purines in both single- and double-stranded RNA. Its toxic action on eukaryotic cells is the result of cleavage of a single phosphodiester bond in the 60S subunit of ribosomes. Inhibits both the EFl (elongation factor 1)-dependent binding of aminoacyl-tRNA and the GTP-dependent binding of EF2 (elongation factor 2) to ribosomes. In Aspergillus giganteus, this protein is Ribonuclease alpha-sarcin (sar).